The chain runs to 466 residues: Cysteine--tRNA ligase (466 aa).

Zn(2+) is bound at residue Cys33. The short motif at 35 to 45 (PTVYDFAHIGN) is the 'HIGH' region element. Zn(2+)-binding residues include Cys221, His246, and Glu250. Positions 279–283 (KMSKS) match the 'KMSKS' region motif. Lys282 is an ATP binding site.

Belongs to the class-I aminoacyl-tRNA synthetase family. Monomer. The cofactor is Zn(2+).

It is found in the cytoplasm. The enzyme catalyses tRNA(Cys) + L-cysteine + ATP = L-cysteinyl-tRNA(Cys) + AMP + diphosphate. The chain is Cysteine--tRNA ligase from Sinorhizobium medicae (strain WSM419) (Ensifer medicae).